An 886-amino-acid chain; its full sequence is Alanine--tRNA ligase (886 aa).

Zn(2+) contacts are provided by H564, H568, C676, and H680.

Belongs to the class-II aminoacyl-tRNA synthetase family. The cofactor is Zn(2+).

Its subcellular location is the cytoplasm. The catalysed reaction is tRNA(Ala) + L-alanine + ATP = L-alanyl-tRNA(Ala) + AMP + diphosphate. In terms of biological role, catalyzes the attachment of alanine to tRNA(Ala) in a two-step reaction: alanine is first activated by ATP to form Ala-AMP and then transferred to the acceptor end of tRNA(Ala). Also edits incorrectly charged Ser-tRNA(Ala) and Gly-tRNA(Ala) via its editing domain. This chain is Alanine--tRNA ligase, found in Bartonella bacilliformis (strain ATCC 35685 / KC583 / Herrer 020/F12,63).